The primary structure comprises 87 residues: Defensin alpha-like protein 1 (87 aa).

Residues 1–19 (MKTLILLSALVLLALQVQA) form the signal peptide. The propeptide occupies 20–56 (DPIQEAEEETKTEEQPADEDQDVSVSFEGPEASAVQD). Over residues 23–41 (QEAEEETKTEEQPADEDQD) the composition is skewed to acidic residues. The tract at residues 23-43 (QEAEEETKTEEQPADEDQDVS) is disordered.

Belongs to the alpha-defensin family. As to quaternary structure, antiparallel homodimer; disulfide-linked. Specifically expressed in small intestine (jejunum and ileum). Probably expressed by Paneth cells at the base of intestinal crypts. Coexpressed with MMP7 in small intestine.

The protein resides in the secreted. Its function is as follows. Intestinal defense peptide. Has potent antibacterial activity against Gram-negative bacteria E.coli O157:H7, S.typhimurium DT104, and K.pneumoniae; and against Gram-positive bacteria S.aureus, methicillin-resistant S.aureus and L.monocytogenes. Remains active in the presence of NaCl and Mg(2+). Probably functions by disrupting bacterial membrane integrity. However, does not show cytotoxic activity towards human intestinal cells. The polypeptide is Defensin alpha-like protein 1 (Rattus norvegicus (Rat)).